Here is a 290-residue protein sequence, read N- to C-terminus: Glycine-N-acyltransferase-like protein 3 (290 aa).

The enzyme catalyses an acyl-CoA + glycine = an N-acylglycine + CoA + H(+). It carries out the reaction (9Z)-octadecenoyl-CoA + glycine = N-(9Z-octadecenoyl)glycine + CoA + H(+). It catalyses the reaction hexadecanoyl-CoA + glycine = N-hexadecanoylglycine + CoA + H(+). It functions in the pathway lipid metabolism. Its function is as follows. Catalyzes the conjugation of long-chain fatty acyl-CoA thioester and glycine to produce long-chain N-(fatty acyl)glycine, an intermediate in the primary fatty acid amide biosynthetic pathway. This is Glycine-N-acyltransferase-like protein 3 from Mus musculus (Mouse).